Reading from the N-terminus, the 195-residue chain is Imidazoleglycerol-phosphate dehydratase (195 aa).

It belongs to the imidazoleglycerol-phosphate dehydratase family.

The protein resides in the cytoplasm. The catalysed reaction is D-erythro-1-(imidazol-4-yl)glycerol 3-phosphate = 3-(imidazol-4-yl)-2-oxopropyl phosphate + H2O. Its pathway is amino-acid biosynthesis; L-histidine biosynthesis; L-histidine from 5-phospho-alpha-D-ribose 1-diphosphate: step 6/9. The chain is Imidazoleglycerol-phosphate dehydratase from Desulfosudis oleivorans (strain DSM 6200 / JCM 39069 / Hxd3) (Desulfococcus oleovorans).